The following is a 1338-amino-acid chain: Phosphoribosylformylglycinamidine synthase (1338 aa).

S215 is subject to Phosphoserine. ATP-binding positions include 322-333 and 402-404; these read GATTGTGGRIRD and AGF. S569 carries the post-translational modification Phosphoserine. Phosphothreonine is present on residues T619 and T623. Residue A706 participates in ATP binding. D707, E746, N750, and D909 together coordinate Mg(2+). S911 lines the ATP pocket. The Glutamine amidotransferase type-1 domain maps to 1064 to 1302; it reads RVAILREEGS…AVMPHPERAV (239 aa). The active-site Nucleophile is the C1158. Catalysis depends on residues H1297 and E1299.

The protein in the N-terminal section; belongs to the FGAMS family.

The protein resides in the cytoplasm. It catalyses the reaction N(2)-formyl-N(1)-(5-phospho-beta-D-ribosyl)glycinamide + L-glutamine + ATP + H2O = 2-formamido-N(1)-(5-O-phospho-beta-D-ribosyl)acetamidine + L-glutamate + ADP + phosphate + H(+). It functions in the pathway purine metabolism; IMP biosynthesis via de novo pathway; 5-amino-1-(5-phospho-D-ribosyl)imidazole from N(2)-formyl-N(1)-(5-phospho-D-ribosyl)glycinamide: step 1/2. Its function is as follows. Phosphoribosylformylglycinamidine synthase involved in the purines biosynthetic pathway. Catalyzes the ATP-dependent conversion of formylglycinamide ribonucleotide (FGAR) and glutamine to yield formylglycinamidine ribonucleotide (FGAM) and glutamate. This chain is Phosphoribosylformylglycinamidine synthase (PFAS), found in Homo sapiens (Human).